Here is a 115-residue protein sequence, read N- to C-terminus: Large ribosomal subunit protein bL20c (115 aa).

The protein belongs to the bacterial ribosomal protein bL20 family.

Its subcellular location is the plastid. The protein resides in the chloroplast. In terms of biological role, binds directly to 23S ribosomal RNA and is necessary for the in vitro assembly process of the 50S ribosomal subunit. It is not involved in the protein synthesizing functions of that subunit. This is Large ribosomal subunit protein bL20c from Pleurastrum terricola (Filamentous green alga).